The sequence spans 309 residues: Tagatose-6-phosphate kinase (309 aa).

This sequence belongs to the carbohydrate kinase PfkB family. LacC subfamily.

The enzyme catalyses D-tagatofuranose 6-phosphate + ATP = D-tagatofuranose 1,6-bisphosphate + ADP + H(+). It participates in carbohydrate metabolism; D-tagatose 6-phosphate degradation; D-glyceraldehyde 3-phosphate and glycerone phosphate from D-tagatose 6-phosphate: step 1/2. The protein is Tagatose-6-phosphate kinase of Streptococcus pyogenes serotype M28 (strain MGAS6180).